Here is a 332-residue protein sequence, read N- to C-terminus: Ribosomal RNA small subunit methyltransferase C (332 aa).

Belongs to the methyltransferase superfamily. RsmC family. As to quaternary structure, monomer.

It is found in the cytoplasm. The enzyme catalyses guanosine(1207) in 16S rRNA + S-adenosyl-L-methionine = N(2)-methylguanosine(1207) in 16S rRNA + S-adenosyl-L-homocysteine + H(+). Specifically methylates the guanine in position 1207 of 16S rRNA in the 30S particle. In Stutzerimonas stutzeri (strain A1501) (Pseudomonas stutzeri), this protein is Ribosomal RNA small subunit methyltransferase C.